A 421-amino-acid polypeptide reads, in one-letter code: Imidazolonepropionase (421 aa).

Residues histidine 80 and histidine 82 each coordinate Fe(3+). Residues histidine 80 and histidine 82 each coordinate Zn(2+). Positions 89, 152, and 185 each coordinate 4-imidazolone-5-propanoate. Residue tyrosine 152 participates in N-formimidoyl-L-glutamate binding. Position 249 (histidine 249) interacts with Fe(3+). A Zn(2+)-binding site is contributed by histidine 249. A 4-imidazolone-5-propanoate-binding site is contributed by glutamate 252. Fe(3+) is bound at residue aspartate 324. Residue aspartate 324 coordinates Zn(2+). N-formimidoyl-L-glutamate is bound by residues asparagine 326 and glycine 328. Residue serine 329 coordinates 4-imidazolone-5-propanoate.

The protein belongs to the metallo-dependent hydrolases superfamily. HutI family. Zn(2+) is required as a cofactor. Requires Fe(3+) as cofactor.

The protein localises to the cytoplasm. The enzyme catalyses 4-imidazolone-5-propanoate + H2O = N-formimidoyl-L-glutamate. It functions in the pathway amino-acid degradation; L-histidine degradation into L-glutamate; N-formimidoyl-L-glutamate from L-histidine: step 3/3. Catalyzes the hydrolytic cleavage of the carbon-nitrogen bond in imidazolone-5-propanoate to yield N-formimidoyl-L-glutamate. It is the third step in the universal histidine degradation pathway. This Bacillus velezensis (strain DSM 23117 / BGSC 10A6 / LMG 26770 / FZB42) (Bacillus amyloliquefaciens subsp. plantarum) protein is Imidazolonepropionase.